We begin with the raw amino-acid sequence, 352 residues long: Putative F-box protein At5g14160 (352 aa).

The 47-residue stretch at 14 to 60 (GVDWSELPEDVIRLVLRRLRLSDFHRARAVCSTWCRVWGDCVSKPNQ) folds into the F-box domain.

The sequence is that of Putative F-box protein At5g14160 from Arabidopsis thaliana (Mouse-ear cress).